The following is a 78-amino-acid chain: Acyl carrier protein (78 aa).

The Carrier domain maps to 4–78 (AQIKEKVYDI…QQAIDYIVKK (75 aa)). The residue at position 39 (Ser-39) is an O-(pantetheine 4'-phosphoryl)serine.

This sequence belongs to the acyl carrier protein (ACP) family. In terms of processing, 4'-phosphopantetheine is transferred from CoA to a specific serine of apo-ACP by AcpS. This modification is essential for activity because fatty acids are bound in thioester linkage to the sulfhydryl of the prosthetic group.

The protein resides in the cytoplasm. It participates in lipid metabolism; fatty acid biosynthesis. In terms of biological role, carrier of the growing fatty acid chain in fatty acid biosynthesis. The sequence is that of Acyl carrier protein from Chlorobium phaeobacteroides (strain DSM 266 / SMG 266 / 2430).